The sequence spans 238 residues: MAIISMKQLLEAGVHFGHQTRRWNPKMAPYIFTERNGIYIIDLQRTVKKIEEAYNFIRDLSRDGGKVLFVGTKKQAQESVKEEAERCGMFYVNVRWLGGTLTNFQTIRRRIERLKELERMEEEGTFDLLPKKEVAHLRGEREKLERFLGGIKEMKSLPDALFIIDPRKERIAVAEGRRLGIPIVAIVDTNCDPDEIDYVIPGNDDAIRAVRLLTSKMADAVIEGQQGQDQPEEEAVVE.

Belongs to the universal ribosomal protein uS2 family.

In Moorella thermoacetica (strain ATCC 39073 / JCM 9320), this protein is Small ribosomal subunit protein uS2.